We begin with the raw amino-acid sequence, 115 residues long: uncharacterized protein (115 aa).

The next 3 helical transmembrane spans lie at 7-27 (TLIFFPLILQIVVTALLIWFD), 40-60 (YALTAFLLAAIPAFLTALLAA), and 72-92 (IVLVSSIISFVYCNMASYFYL).

It localises to the cell membrane. This is an uncharacterized protein from Haemophilus influenzae (strain ATCC 51907 / DSM 11121 / KW20 / Rd).